Here is a 138-residue protein sequence, read N- to C-terminus: Small ribosomal subunit protein uS11c (138 aa).

The segment at 1 to 23 is disordered; the sequence is MAKPILRIGSRKNTRSSSRKNVR. The span at 9–23 shows a compositional bias: basic residues; sequence GSRKNTRSSSRKNVR.

Belongs to the universal ribosomal protein uS11 family. Part of the 30S ribosomal subunit.

The protein localises to the plastid. The protein resides in the chloroplast. In Nasturtium officinale (Watercress), this protein is Small ribosomal subunit protein uS11c.